The sequence spans 526 residues: MSVIWKDAIRSNAWPFIEAKKILDSLNGKVPEKGYVLFETGYGPSGLPHIGTFAENARVVMVQKAFEQLSDIPTKLICFSDDMDGLRKVPSNIPNPEMVAQYMDMPLTSIPDPFGECKSYGHYMNAKLCTFLDKFGFQYEFYSSTNCYKAGLFDDMLIRVLEKYDEIMALMLPTFREERKTTYAPFMPICPKTGKVLQVPIEKWDARAGTVSYKDEDGNDVEVPVTGGHCKLQWKPDFGMRWAALNVDYEMYGKDHLANSRLYSKICQILGGKPPVQFCYELFLDENGEKISKSRGNSISVDDWLKYASVESIALFMYKNPARAKRLFFDVIPKNVDEYITLNQKYHLEEDMVTRFANPVYHIHHGNVPKIETFGLTYSLLLNLTAVCNPSDKSVLWGFITKYEPKATPNTSTYLDHLAEFAIRYYHDFVQIHKSYLVVSEKHKIILYDILDMLSNITDQTEEENIQKAMYDIGMKAGYKNLRYYFKDLYQILLGQNEGPRFGTFIKLYGVEATKKLVEEKLYPVA.

The 'HIGH' region signature appears at 44-52 (PSGLPHIGT). The 'KMSKS' region motif lies at 290 to 294 (KISKS). Lysine 293 contacts ATP.

This sequence belongs to the class-I aminoacyl-tRNA synthetase family.

The protein localises to the cytoplasm. The catalysed reaction is tRNA(Lys) + L-lysine + ATP = L-lysyl-tRNA(Lys) + AMP + diphosphate. The sequence is that of Lysine--tRNA ligase from Rickettsia typhi (strain ATCC VR-144 / Wilmington).